The chain runs to 146 residues: D-aminoacyl-tRNA deacylase (146 aa).

Residues 137–138 (GP) carry the Gly-cisPro motif, important for rejection of L-amino acids motif.

This sequence belongs to the DTD family. Homodimer.

Its subcellular location is the cytoplasm. The catalysed reaction is glycyl-tRNA(Ala) + H2O = tRNA(Ala) + glycine + H(+). It catalyses the reaction a D-aminoacyl-tRNA + H2O = a tRNA + a D-alpha-amino acid + H(+). Its function is as follows. An aminoacyl-tRNA editing enzyme that deacylates mischarged D-aminoacyl-tRNAs. Also deacylates mischarged glycyl-tRNA(Ala), protecting cells against glycine mischarging by AlaRS. Acts via tRNA-based rather than protein-based catalysis; rejects L-amino acids rather than detecting D-amino acids in the active site. By recycling D-aminoacyl-tRNA to D-amino acids and free tRNA molecules, this enzyme counteracts the toxicity associated with the formation of D-aminoacyl-tRNA entities in vivo and helps enforce protein L-homochirality. This chain is D-aminoacyl-tRNA deacylase, found in Bacillus cereus (strain Q1).